The primary structure comprises 693 residues: Polyribonucleotide nucleotidyltransferase (693 aa).

Residues Asp489 and Asp495 each contribute to the Mg(2+) site. The region spanning 556 to 615 (PQIHVMNINPAKIKDVVGRGGATVKGIVEKTGAQIDTSDSGEVKVFAKDKKSMDMAVAMI) is the KH domain. The 69-residue stretch at 625-693 (GQVYKGKIVK…GRVKLSLVAR (69 aa)) folds into the S1 motif domain.

This sequence belongs to the polyribonucleotide nucleotidyltransferase family. As to quaternary structure, component of the RNA degradosome, which is a multiprotein complex involved in RNA processing and mRNA degradation. Mg(2+) is required as a cofactor.

It is found in the cytoplasm. It carries out the reaction RNA(n+1) + phosphate = RNA(n) + a ribonucleoside 5'-diphosphate. Functionally, involved in mRNA degradation. Catalyzes the phosphorolysis of single-stranded polyribonucleotides processively in the 3'- to 5'-direction. The polypeptide is Polyribonucleotide nucleotidyltransferase (Francisella tularensis subsp. holarctica (strain FTNF002-00 / FTA)).